Here is a 438-residue protein sequence, read N- to C-terminus: Protein translocase subunit SecY (438 aa).

Helical transmembrane passes span 18–38 (ILFT…PSPG), 76–96 (VGVM…VVIP), 121–141 (IALA…GGLL), 154–174 (IFSL…VMWM), 177–197 (LITE…GIAA), 212–232 (GVIF…VVFV), 269–289 (VIPV…TQLV), 315–335 (PVYI…YVSV), 375–395 (LPGS…LQIG), and 398–418 (GEVQ…GVGL).

Belongs to the SecY/SEC61-alpha family. Component of the Sec protein translocase complex. Heterotrimer consisting of SecY, SecE and SecG subunits. The heterotrimers can form oligomers, although 1 heterotrimer is thought to be able to translocate proteins. Interacts with the ribosome. Interacts with SecDF, and other proteins may be involved. Interacts with SecA.

The protein resides in the cell membrane. In terms of biological role, the central subunit of the protein translocation channel SecYEG. Consists of two halves formed by TMs 1-5 and 6-10. These two domains form a lateral gate at the front which open onto the bilayer between TMs 2 and 7, and are clamped together by SecE at the back. The channel is closed by both a pore ring composed of hydrophobic SecY resides and a short helix (helix 2A) on the extracellular side of the membrane which forms a plug. The plug probably moves laterally to allow the channel to open. The ring and the pore may move independently. The polypeptide is Protein translocase subunit SecY (Mycobacterium leprae (strain TN)).